A 110-amino-acid polypeptide reads, in one-letter code: Urease subunit beta (110 aa).

The protein belongs to the urease beta subunit family. As to quaternary structure, heterotrimer of UreA (gamma), UreB (beta) and UreC (alpha) subunits. Three heterotrimers associate to form the active enzyme.

It is found in the cytoplasm. It carries out the reaction urea + 2 H2O + H(+) = hydrogencarbonate + 2 NH4(+). It functions in the pathway nitrogen metabolism; urea degradation; CO(2) and NH(3) from urea (urease route): step 1/1. This Pseudoalteromonas translucida (strain TAC 125) protein is Urease subunit beta.